The following is a 61-amino-acid chain: Sec-independent protein translocase protein TatA (61 aa).

Residues 1–21 form a helical membrane-spanning segment; it reads MFGIGMPELIVILVIVLVVFG.

The protein belongs to the TatA/E family. In terms of assembly, the Tat system comprises two distinct complexes: a TatABC complex, containing multiple copies of TatA, TatB and TatC subunits, and a separate TatA complex, containing only TatA subunits. Substrates initially bind to the TatABC complex, which probably triggers association of the separate TatA complex to form the active translocon.

The protein localises to the cell inner membrane. Functionally, part of the twin-arginine translocation (Tat) system that transports large folded proteins containing a characteristic twin-arginine motif in their signal peptide across membranes. TatA could form the protein-conducting channel of the Tat system. This is Sec-independent protein translocase protein TatA from Geobacter metallireducens (strain ATCC 53774 / DSM 7210 / GS-15).